Reading from the N-terminus, the 125-residue chain is MAKHRSNRLAETLKQEISQLIREELKDPRIGFVTVTSVEVADDLGNAKVYVSVLGDSQQAKDSLDALKRAAGFVRSEIGKRVRLRHAPEIVFKYDTSIEHGAHIAQLLRGVKQEEEKDEGESHDQ.

It belongs to the RbfA family. In terms of assembly, monomer. Binds 30S ribosomal subunits, but not 50S ribosomal subunits or 70S ribosomes.

It localises to the cytoplasm. In terms of biological role, one of several proteins that assist in the late maturation steps of the functional core of the 30S ribosomal subunit. Associates with free 30S ribosomal subunits (but not with 30S subunits that are part of 70S ribosomes or polysomes). Required for efficient processing of 16S rRNA. May interact with the 5'-terminal helix region of 16S rRNA. The protein is Ribosome-binding factor A of Desulfitobacterium hafniense (strain DSM 10664 / DCB-2).